The primary structure comprises 442 residues: tRNA-2-methylthio-N(6)-dimethylallyladenosine synthase (442 aa).

The 119-residue stretch at 2 to 120 folds into the MTTase N-terminal domain; it reads KKVFIRTFGC…LPKMIVDKET (119 aa). [4Fe-4S] cluster-binding residues include Cys-11, Cys-49, Cys-83, Cys-157, Cys-161, and Cys-164. A Radical SAM core domain is found at 143 to 375; it reads RVEGGAAFVS…NEVIEAETAR (233 aa). In terms of domain architecture, TRAM spans 378–441; the sequence is QTMVGTVQRC…TFSLRGKVVE (64 aa).

It belongs to the methylthiotransferase family. MiaB subfamily. In terms of assembly, monomer. [4Fe-4S] cluster serves as cofactor.

The protein localises to the cytoplasm. It catalyses the reaction N(6)-dimethylallyladenosine(37) in tRNA + (sulfur carrier)-SH + AH2 + 2 S-adenosyl-L-methionine = 2-methylsulfanyl-N(6)-dimethylallyladenosine(37) in tRNA + (sulfur carrier)-H + 5'-deoxyadenosine + L-methionine + A + S-adenosyl-L-homocysteine + 2 H(+). Functionally, catalyzes the methylthiolation of N6-(dimethylallyl)adenosine (i(6)A), leading to the formation of 2-methylthio-N6-(dimethylallyl)adenosine (ms(2)i(6)A) at position 37 in tRNAs that read codons beginning with uridine. The chain is tRNA-2-methylthio-N(6)-dimethylallyladenosine synthase from Neisseria meningitidis serogroup B (strain ATCC BAA-335 / MC58).